The sequence spans 340 residues: Aldo-keto reductase yakc [NADP(+)] (340 aa).

Tyr-56 functions as the Proton donor in the catalytic mechanism. His-126 is a substrate binding site. Residue 208 to 218 coordinates NADP(+); that stretch reads APLGRGFLTGA.

Belongs to the aldo/keto reductase family. Aldo/keto reductase 2 subfamily. As to quaternary structure, monomer.

The protein is Aldo-keto reductase yakc [NADP(+)] (yakc) of Schizosaccharomyces pombe (strain 972 / ATCC 24843) (Fission yeast).